We begin with the raw amino-acid sequence, 104 residues long: L-rhamnose mutarotase (104 aa).

Position 18 (Tyr18) interacts with substrate. The active-site Proton donor is the His22. Substrate-binding positions include Tyr41 and 76–77 (WW).

This sequence belongs to the rhamnose mutarotase family. Homodimer.

The protein resides in the cytoplasm. The enzyme catalyses alpha-L-rhamnose = beta-L-rhamnose. The protein operates within carbohydrate metabolism; L-rhamnose metabolism. Functionally, involved in the anomeric conversion of L-rhamnose. The polypeptide is L-rhamnose mutarotase (Escherichia coli (strain K12 / MC4100 / BW2952)).